The primary structure comprises 244 residues: uncharacterized protein (244 aa).

Composition is skewed to basic and acidic residues over residues 1 to 10 (MNDPFARMET) and 100 to 127 (GTRG…HGEE). 3 disordered regions span residues 1-79 (MNDP…GEEL), 100-130 (GTRG…EPNY), and 219-244 (TGAS…EIKL).

This is an uncharacterized protein from Homo sapiens (Human).